Reading from the N-terminus, the 395-residue chain is MVKKFKNVFMIVADSMGIGKDQKQESFGDNGANTFLHVWQNYDLQIPNLKKLGIEALVSLKDKNEDLKPQAYVGKIFAKSNAKDTLAGHWEMMGIQTKVANPNFIEKGFPDELIKELEKAFDGRKIIGNENASGTEILKRLAHREIENNEIIVYTSPDSTLQICGHEEHMGLENLYRYAKAARQICSSKSIWNVARVIARPYVGQNGSYTRTFNRHDYANKPSETLLNSLQKAKIQTIAVGKINDIFVGQAIDKVYPPASDVENMDVAIEIAKTKKENQFVFVNLVEFDSHYGHRRDVIGYGKNIDSFDKKLGELLEVLSDDDLLIITADHGNDPTFPGSSHTREALPLIVYSKAFKNPSYLKTLLGLGTSGNIVARNFGLKTIETGEDIWDKLK.

6 residues coordinate Mn(2+): Asp14, Asp289, His294, Asp330, His331, and His342.

This sequence belongs to the phosphopentomutase family. It depends on Mn(2+) as a cofactor.

The protein localises to the cytoplasm. It catalyses the reaction 2-deoxy-alpha-D-ribose 1-phosphate = 2-deoxy-D-ribose 5-phosphate. It carries out the reaction alpha-D-ribose 1-phosphate = D-ribose 5-phosphate. The protein operates within carbohydrate degradation; 2-deoxy-D-ribose 1-phosphate degradation; D-glyceraldehyde 3-phosphate and acetaldehyde from 2-deoxy-alpha-D-ribose 1-phosphate: step 1/2. Its function is as follows. Isomerase that catalyzes the conversion of deoxy-ribose 1-phosphate (dRib-1-P) and ribose 1-phosphate (Rib-1-P) to deoxy-ribose 5-phosphate (dRib-5-P) and ribose 5-phosphate (Rib-5-P), respectively. In Mycoplasmopsis pulmonis (strain UAB CTIP) (Mycoplasma pulmonis), this protein is Phosphopentomutase.